The chain runs to 106 residues: Malonate decarboxylase acyl carrier protein (106 aa).

The residue at position 28 (serine 28) is an O-(phosphoribosyl dephospho-coenzyme A)serine.

It belongs to the MdcC family. Covalently binds the prosthetic group of malonate decarboxylase.

The protein localises to the cytoplasm. In terms of biological role, subunit of malonate decarboxylase, it is an acyl carrier protein to which acetyl and malonyl thioester residues are bound via a 2'-(5''-phosphoribosyl)-3'-dephospho-CoA prosthetic group and turn over during the catalytic mechanism. This Stenotrophomonas maltophilia (strain K279a) protein is Malonate decarboxylase acyl carrier protein.